Consider the following 456-residue polypeptide: Bifunctional protein GlmU (456 aa).

A pyrophosphorylase region spans residues M1–R229. UDP-N-acetyl-alpha-D-glucosamine is bound by residues L11–G14, K25, Q76, G81–T82, Y103–D105, G140, E154, N169, and N227. D105 is a binding site for Mg(2+). A Mg(2+)-binding site is contributed by N227. Positions L230 to S250 are linker. Residues G251–K456 are N-acetyltransferase. Residues R333 and K351 each coordinate UDP-N-acetyl-alpha-D-glucosamine. H363 acts as the Proton acceptor in catalysis. UDP-N-acetyl-alpha-D-glucosamine is bound by residues Y366 and N377. Residues A380, N386–Y387, S405, A423, and R440 contribute to the acetyl-CoA site.

In the N-terminal section; belongs to the N-acetylglucosamine-1-phosphate uridyltransferase family. It in the C-terminal section; belongs to the transferase hexapeptide repeat family. As to quaternary structure, homotrimer. Mg(2+) serves as cofactor.

It localises to the cytoplasm. It carries out the reaction alpha-D-glucosamine 1-phosphate + acetyl-CoA = N-acetyl-alpha-D-glucosamine 1-phosphate + CoA + H(+). It catalyses the reaction N-acetyl-alpha-D-glucosamine 1-phosphate + UTP + H(+) = UDP-N-acetyl-alpha-D-glucosamine + diphosphate. It functions in the pathway nucleotide-sugar biosynthesis; UDP-N-acetyl-alpha-D-glucosamine biosynthesis; N-acetyl-alpha-D-glucosamine 1-phosphate from alpha-D-glucosamine 6-phosphate (route II): step 2/2. Its pathway is nucleotide-sugar biosynthesis; UDP-N-acetyl-alpha-D-glucosamine biosynthesis; UDP-N-acetyl-alpha-D-glucosamine from N-acetyl-alpha-D-glucosamine 1-phosphate: step 1/1. The protein operates within bacterial outer membrane biogenesis; LPS lipid A biosynthesis. Catalyzes the last two sequential reactions in the de novo biosynthetic pathway for UDP-N-acetylglucosamine (UDP-GlcNAc). The C-terminal domain catalyzes the transfer of acetyl group from acetyl coenzyme A to glucosamine-1-phosphate (GlcN-1-P) to produce N-acetylglucosamine-1-phosphate (GlcNAc-1-P), which is converted into UDP-GlcNAc by the transfer of uridine 5-monophosphate (from uridine 5-triphosphate), a reaction catalyzed by the N-terminal domain. This chain is Bifunctional protein GlmU, found in Salmonella dublin (strain CT_02021853).